Consider the following 251-residue polypeptide: Probable-ribose 5-phosphate isomerase (251 aa).

Belongs to the ribose 5-phosphate isomerase family.

The catalysed reaction is aldehydo-D-ribose 5-phosphate = D-ribulose 5-phosphate. The protein operates within carbohydrate degradation; pentose phosphate pathway; D-ribose 5-phosphate from D-ribulose 5-phosphate (non-oxidative stage): step 1/1. The sequence is that of Probable-ribose 5-phosphate isomerase (rpia-1) from Caenorhabditis elegans.